A 375-amino-acid chain; its full sequence is Succinyl-diaminopimelate desuccinylase (375 aa).

His66 is a Zn(2+) binding site. Asp68 is a catalytic residue. Asp99 is a binding site for Zn(2+). The active-site Proton acceptor is the Glu133. The Zn(2+) site is built by Glu134, Glu162, and His348.

This sequence belongs to the peptidase M20A family. DapE subfamily. In terms of assembly, homodimer. Zn(2+) serves as cofactor. It depends on Co(2+) as a cofactor.

It catalyses the reaction N-succinyl-(2S,6S)-2,6-diaminopimelate + H2O = (2S,6S)-2,6-diaminopimelate + succinate. It functions in the pathway amino-acid biosynthesis; L-lysine biosynthesis via DAP pathway; LL-2,6-diaminopimelate from (S)-tetrahydrodipicolinate (succinylase route): step 3/3. Functionally, catalyzes the hydrolysis of N-succinyl-L,L-diaminopimelic acid (SDAP), forming succinate and LL-2,6-diaminopimelate (DAP), an intermediate involved in the bacterial biosynthesis of lysine and meso-diaminopimelic acid, an essential component of bacterial cell walls. The polypeptide is Succinyl-diaminopimelate desuccinylase (Salmonella choleraesuis (strain SC-B67)).